The sequence spans 200 residues: Pyridoxal 5'-phosphate synthase subunit PdxT (200 aa).

52-54 is a binding site for L-glutamine; the sequence is GES. Catalysis depends on Cys84, which acts as the Nucleophile. Residues Arg116 and 145–146 contribute to the L-glutamine site; that span reads IR. Catalysis depends on charge relay system residues His181 and Glu183.

This sequence belongs to the glutaminase PdxT/SNO family. In the presence of PdxS, forms a dodecamer of heterodimers. Only shows activity in the heterodimer.

It carries out the reaction aldehydo-D-ribose 5-phosphate + D-glyceraldehyde 3-phosphate + L-glutamine = pyridoxal 5'-phosphate + L-glutamate + phosphate + 3 H2O + H(+). It catalyses the reaction L-glutamine + H2O = L-glutamate + NH4(+). Its pathway is cofactor biosynthesis; pyridoxal 5'-phosphate biosynthesis. Its function is as follows. Catalyzes the hydrolysis of glutamine to glutamate and ammonia as part of the biosynthesis of pyridoxal 5'-phosphate. The resulting ammonia molecule is channeled to the active site of PdxS. The polypeptide is Pyridoxal 5'-phosphate synthase subunit PdxT (Saccharolobus islandicus (strain M.16.27) (Sulfolobus islandicus)).